The following is a 589-amino-acid chain: MLRSHGAGVLRKSDAGQQVTLAGWVSRRRDHGGVIFIDLRDSSGITQAVFREPDVLAQAHRLRAEFCIAVSGVVEIRPEGNANAEIPTGDIEVNATSLTVLGESAPLPFQLDEPAGEELRLKYRYLDLRRDGPGSAIRLRSKVNATARAVLARHDFVEIETPTITRSTPEGARDFLVPARLRPGTFYALPQSPQLFKQLLMVAGMERYYQIAHCYRDEDFRADRQPEFTQLDMEMSFVDAEDVIAISEEILTELWMLIGYHIPAPIPRISYADAMRRFGSDKPDLRFGLELVECTEFFCDTTFRVFQAPYVGAVVMPGGAAQPRRTLDEWQDWAKQRGHRGLAYVLVTDDGTLGGPVAKNFSDAERSRLASHVGAEPGDCIFFSAGPAKSSRALLGAARGEIANRLGLIDPEAWAFVWVVDPPLFERADEATKVGEMAVGSGAWTAVHHAFTSPKPEFEDSIESDPGSVLADAYDIVCNGHEIGSGSVRINRRDIQERVFAVMGLEKAEAEEKFGFLLEAFTFGAPPHGGIAFGWDRTNALLAGMESIREVIAFPKTGGGVDPLTDAPASITAQQRKESGIDTKPKEVE.

Glu170 contributes to the L-aspartate binding site. The tract at residues 194-197 is aspartate; it reads QLFK. Arg216 provides a ligand contact to L-aspartate. ATP is bound by residues 216-218 and Gln225; that span reads RDE. His448 is a binding site for L-aspartate. Residue Glu482 coordinates ATP. Position 489 (Arg489) interacts with L-aspartate. Residue 534 to 537 coordinates ATP; it reads GWDR. A disordered region spans residues 563–589; it reads PLTDAPASITAQQRKESGIDTKPKEVE. Positions 575-589 are enriched in basic and acidic residues; it reads QRKESGIDTKPKEVE.

It belongs to the class-II aminoacyl-tRNA synthetase family. Type 1 subfamily. As to quaternary structure, homodimer.

The protein resides in the cytoplasm. It catalyses the reaction tRNA(Asx) + L-aspartate + ATP = L-aspartyl-tRNA(Asx) + AMP + diphosphate. Aspartyl-tRNA synthetase with relaxed tRNA specificity since it is able to aspartylate not only its cognate tRNA(Asp) but also tRNA(Asn). Reaction proceeds in two steps: L-aspartate is first activated by ATP to form Asp-AMP and then transferred to the acceptor end of tRNA(Asp/Asn). The sequence is that of Aspartate--tRNA(Asp/Asn) ligase from Mycobacterium leprae (strain Br4923).